The sequence spans 1173 residues: 3-hydroxy-3-methylglutaryl coenzyme A reductase mlcD (1173 aa).

N-linked (GlcNAc...) asparagine glycans are attached at residues N143 and N186. Residues D241 to I420 form the SSD domain. Transmembrane regions (helical) follow at residues V242–S262, L272–I292, L302–L322, N368–I388, V397–I417, F479–Q499, and V594–F614. Residues F498–S673 form a linker region. The segment covering N647 to P666 has biased composition (polar residues). A disordered region spans residues N647–T669. Positions D674–R1133 are catalytic. The active-site Charge relay system is the E822. Residue N886 is glycosylated (N-linked (GlcNAc...) asparagine). The Charge relay system role is filled by K956. N997 is a glycosylation site (N-linked (GlcNAc...) asparagine). Residue D1032 is the Charge relay system of the active site. Catalysis depends on H1128, which acts as the Proton donor. An N-linked (GlcNAc...) asparagine glycan is attached at N1132. Residues N1132–R1173 form a disordered region. The segment covering R1133 to S1148 has biased composition (low complexity).

Belongs to the HMG-CoA reductase family.

It localises to the endoplasmic reticulum membrane. It carries out the reaction (R)-mevalonate + 2 NADP(+) + CoA = (3S)-3-hydroxy-3-methylglutaryl-CoA + 2 NADPH + 2 H(+). Its pathway is polyketide biosynthesis. Functionally, HMG-CoA reductase; part of the gene cluster that mediates the biosynthesis of compactin, also known as mevastatin or ML-236B, and which acts as a potent competitive inhibitor of HMG-CoA reductase. Compactin biosynthesis is performed in two stages. The first stage is catalyzed by the nonaketide synthase mlcA, which belongs to type I polyketide synthases and catalyzes the iterative nine-step formation of the polyketide. This PKS stage is completed by the action of dehydrogenase mlcG, which catalyzes the NADPH-dependent reduction of the unsaturated tetra-, penta- and heptaketide intermediates that arise during the mlcA-mediated biosynthesis of the nonaketide chain and leads to dihydro-ML-236C carboxylate. Covalently bound dihydro-ML-236C carboxylate is released from mlcA by the mlcF esterase. Conversion of dihydro-ML-236C carboxylate into ML-236A carboxylate is subsequently performed with the participation of molecular oxygen and P450 monoogygenase mlcC. Finally, mlcH performs the conversion of ML-236A carboxylate to ML-236B/compactin carboxylate through the addition of the side-chain diketide moiety produced by the diketide synthase mlcB. HMG-CoA reductase mlcD may act as a down-regulator of compactin production and is involved in conferring resistance to ML-236B/compactin. This Penicillium citrinum protein is 3-hydroxy-3-methylglutaryl coenzyme A reductase mlcD.